The chain runs to 978 residues: MEQNGENHLKDPLLQADGGGSGASPAGASPRKERKTRKVMFNVRGISCASCAVSIETVVAGLKGVESVSVSPLQGQAVVQYRPEEADARTIKEAIEGLNFEVDELQEQEIAVCRLQIKGMACTSCSESVERALQMVPGVKKAAVGLALEEAKVHFDPNITSRDLIIEAIEDAGFGADLISSGDDVNKVHLKLEGVSSPEDIKLIQSRLESVEGVNNVECDTAGQTIIVAYDPDVTGPRLLIQCIQDAAQPPKYFNASLYSPPKQREAERHHEIRNYRNQFLWSCLFSVPVFMFSMVLPMISPFGDWLFYKVCNNMTIGMLLRWLLCSPVQFIIGWRFYVGAYHALKRGYSNMDVLVALGTNAAYFYSVYIVLKALTSESFEGQDFFETSAMLISFILLGKYLEVVAKGKTSDALSKLTELAPETACLLTLDKDGNAISETEISTQLLQRNDVIKIVPGEKVPVDGVVIKGQSHVNESMITGEARPIAKKPGDKVIGGTVNDNGCIIVKVTHVGSETALSQIVQLVEAAQLARAPVQKLADRISRFFVPTVVVAAFLTWLGWFVAGQFDIYPREWIPKAMDSFELALQFGISVLVVACPCALGLATPTAVMVATGKGASQGVLIKGGNALEKAHKVKAIIFDKTGTLTVGKPSVVQTKVFSKIPLLELCDLAAGAEANSEHPLSKAIVEYTKKLREQYGSHSDHIMESKDFEVHPGAGVSANVEGKLVLVGNKRLMQEFEVPISSEVEGHMSETEELARTCVLVAIDRTICGALSVSDPLKPEAGRAISYLSSMGISSIMVTGDNWATAKSIAKEVGIGTVFAEIDPVGKAEKIKDLQMKGLTVAMVGDGINDSPALAAADVGLAIGAGTDVAIEAADIVLMRSSLEDVITAIDLSRKTLSRIRLNYVWALGYNVLGMPVAAGVLFPFTGIRLPPWLAGACMAASSVSVVCSSLLLQLYKKPLHVEEVAAGPKNDPDLV.

Over residues 1–11 (MEQNGENHLKD) the composition is skewed to basic and acidic residues. The interval 1 to 35 (MEQNGENHLKDPLLQADGGGSGASPAGASPRKERK) is disordered. HMA domains follow at residues 37–103 (RKVM…FEVD), 111–177 (AVCR…FGAD), and 186–252 (NKVH…QPPK). Cu(+) is bound by residues Cys-48, Cys-51, Cys-122, and Cys-125. 8 consecutive transmembrane segments (helical) span residues 280–300 (FLWSCLFSVPVFMFSMVLPMI), 315–335 (MTIGMLLRWLLCSPVQFIIGW), 352–372 (MDVLVALGTNAAYFYSVYIVL), 385–405 (FFETSAMLISFILLGKYLEVV), 545–565 (FFVPTVVVAAFLTWLGWFVAG), 584–604 (LALQFGISVLVVACPCALGLA), 907–927 (VWALGYNVLGMPVAAGVLFPF), and 935–955 (WLAGACMAASSVSVVCSSLLL).

The protein belongs to the cation transport ATPase (P-type) (TC 3.A.3) family. Type IB subfamily. Highly expressed in roots. Expressed in vascular tissues of the stele, mainly in pericycle cells.

The protein localises to the vacuole membrane. The enzyme catalyses Cu(+)(in) + ATP + H2O = Cu(+)(out) + ADP + phosphate + H(+). In terms of biological role, copper (Cu) transporter that mediates Cu transport in root vacuoles. Involved in Cu detoxification by sequestrating Cu into root vacuoles and limiting translocation of Cu from the roots to the shoots, and accumulation in grains. In Oryza sativa subsp. japonica (Rice), this protein is Copper-transporting ATPase HMA4.